The sequence spans 321 residues: Tetraacyldisaccharide 4'-kinase (321 aa).

ATP is bound at residue 54-61; the sequence is SVGGTGKT.

The protein belongs to the LpxK family.

It carries out the reaction a lipid A disaccharide + ATP = a lipid IVA + ADP + H(+). It functions in the pathway glycolipid biosynthesis; lipid IV(A) biosynthesis; lipid IV(A) from (3R)-3-hydroxytetradecanoyl-[acyl-carrier-protein] and UDP-N-acetyl-alpha-D-glucosamine: step 6/6. Its function is as follows. Transfers the gamma-phosphate of ATP to the 4'-position of a tetraacyldisaccharide 1-phosphate intermediate (termed DS-1-P) to form tetraacyldisaccharide 1,4'-bis-phosphate (lipid IVA). This is Tetraacyldisaccharide 4'-kinase from Rickettsia peacockii (strain Rustic).